The sequence spans 330 residues: DNA-directed RNA polymerase subunit alpha (330 aa).

Residues 1–231 (MAILAFQKPD…IYHFMLFSDE (231 aa)) form an alpha N-terminal domain (alpha-NTD) region. Residues 253–330 (MRQLLKTKLV…DISKYKLDKE (78 aa)) form an alpha C-terminal domain (alpha-CTD) region.

The protein belongs to the RNA polymerase alpha chain family. As to quaternary structure, homodimer. The RNAP catalytic core consists of 2 alpha, 1 beta, 1 beta' and 1 omega subunit. When a sigma factor is associated with the core the holoenzyme is formed, which can initiate transcription.

It carries out the reaction RNA(n) + a ribonucleoside 5'-triphosphate = RNA(n+1) + diphosphate. Functionally, DNA-dependent RNA polymerase catalyzes the transcription of DNA into RNA using the four ribonucleoside triphosphates as substrates. The chain is DNA-directed RNA polymerase subunit alpha from Phocaeicola vulgatus (strain ATCC 8482 / DSM 1447 / JCM 5826 / CCUG 4940 / NBRC 14291 / NCTC 11154) (Bacteroides vulgatus).